The chain runs to 36 residues: Photosystem I reaction center subunit VIII (36 aa).

The helical transmembrane segment at 7 to 29 (PSILVPLVGIIFPGISMALLFIY) threads the bilayer.

This sequence belongs to the PsaI family.

It localises to the plastid. The protein localises to the chloroplast thylakoid membrane. May help in the organization of the PsaL subunit. The protein is Photosystem I reaction center subunit VIII of Gracilaria tenuistipitata var. liui (Red alga).